Reading from the N-terminus, the 695-residue chain is Sodium-dependent phosphate transport protein 2B (695 aa).

The tract at residues M1 to P44 is disordered. Residues M1–K90 are Cytoplasmic-facing. The helical transmembrane segment at I91–F111 threads the bilayer. Residues V112–N136 lie on the Extracellular side of the membrane. The helical transmembrane segment at N137 to V157 threads the bilayer. Residues Q158–A213 lie on the Cytoplasmic side of the membrane. Residues F214–L234 traverse the membrane as a helical segment. The Extracellular portion of the chain corresponds to E235 to A363. Residues N295, N313, N321, N340, and N356 are each glycosylated (N-linked (GlcNAc...) asparagine). A disulfide bridge links C303 with C350. The chain crosses the membrane as a helical span at residues V364–V384. Residues K385–P408 lie on the Cytoplasmic side of the membrane. The chain crosses the membrane as a helical span at residues F409–I429. At V430–Q486 the chain is on the extracellular side. The helical transmembrane segment at I487–F507 threads the bilayer. At T508–R526 the chain is on the cytoplasmic side. Residues W527–L547 form a helical membrane-spanning segment. Topologically, residues S548–G551 are extracellular. Residues W552 to L572 traverse the membrane as a helical segment. Residues R573–F695 are Cytoplasmic-facing.

Belongs to the SLC34A transporter family. Highly expressed in the lung, in type II alveolar cells. Moderately expressed in kidney followed by small intestine.

It is found in the apical cell membrane. The catalysed reaction is 3 Na(+)(out) + phosphate(out) = 3 Na(+)(in) + phosphate(in). Functionally, involved in actively transporting phosphate into cells via Na(+) cotransport. The sequence is that of Sodium-dependent phosphate transport protein 2B (Slc34a2) from Rattus norvegicus (Rat).